The primary structure comprises 368 residues: Phospho-N-acetylmuramoyl-pentapeptide-transferase (368 aa).

10 helical membrane passes run 32–52 (TGGAMVTGALFVFLFGPWIID), 79–99 (TPTMGGLMILSGLVVSTVLWA), 102–122 (LNPYVWIVLAVTLGFGFIGFY), 140–160 (TRLLLELLIALAACYALIRLG), 176–196 (VVVDLGWFFLAFGAFIIVGAG), 207–227 (GLAIVPVMIAAASFGMIAYLA), 247–267 (LAVLCGAVLGAGLGFLWFNAP), 271–291 (IFMGDTGSLALGGMLGSIAVA), 296–316 (IVLAVIGGLFVLEAVSVIVQV), and 345–365 (QIVIRFWIISVMLALAGLSTL).

This sequence belongs to the glycosyltransferase 4 family. MraY subfamily. It depends on Mg(2+) as a cofactor.

It localises to the cell inner membrane. It catalyses the reaction UDP-N-acetyl-alpha-D-muramoyl-L-alanyl-gamma-D-glutamyl-meso-2,6-diaminopimeloyl-D-alanyl-D-alanine + di-trans,octa-cis-undecaprenyl phosphate = di-trans,octa-cis-undecaprenyl diphospho-N-acetyl-alpha-D-muramoyl-L-alanyl-D-glutamyl-meso-2,6-diaminopimeloyl-D-alanyl-D-alanine + UMP. It functions in the pathway cell wall biogenesis; peptidoglycan biosynthesis. Its function is as follows. Catalyzes the initial step of the lipid cycle reactions in the biosynthesis of the cell wall peptidoglycan: transfers peptidoglycan precursor phospho-MurNAc-pentapeptide from UDP-MurNAc-pentapeptide onto the lipid carrier undecaprenyl phosphate, yielding undecaprenyl-pyrophosphoryl-MurNAc-pentapeptide, known as lipid I. The protein is Phospho-N-acetylmuramoyl-pentapeptide-transferase of Nitrobacter hamburgensis (strain DSM 10229 / NCIMB 13809 / X14).